A 575-amino-acid chain; its full sequence is Transcription factor COE2 (575 aa).

An interaction with DNA region spans residues 62-65 (RKSN). The segment at 150 to 169 (CRVLLTHEVMCSRCCEKKSC) adopts a C5-type zinc-finger fold. 2 interaction with DNA regions span residues 196–203 (NCLKTAGN) and 235–238 (NNSK). The IPT/TIG domain occupies 253–336 (PCIKAISPSE…KGAPGRFIYT (84 aa)). Residues 441–453 (STQGNNQGYIRNT) are compositionally biased toward polar residues. The interval 441 to 479 (STQGNNQGYIRNTSSISPRGYSSSSTPQQSNYSTSSNSM) is disordered. Over residues 454 to 479 (SSISPRGYSSSSTPQQSNYSTSSNSM) the composition is skewed to low complexity.

This sequence belongs to the COE family. Forms either a homodimer or a heterodimer with a related family member. Interacts with SIX1.

It is found in the nucleus. Its function is as follows. Transcription factor that, in osteoblasts, activates the decoy receptor for RANKL, TNFRSF11B, which in turn regulates osteoclast differentiation. Acts in synergy with the Wnt-responsive LEF1/CTNNB1 pathway. Recognizes variations of the palindromic sequence 5'-ATTCCCNNGGGAATT-3'. The protein is Transcription factor COE2 (EBF2) of Homo sapiens (Human).